Consider the following 257-residue polypeptide: Ribosomal RNA small subunit methyltransferase J (257 aa).

Residues 107-108 (RD), 123-124 (ER), and Asp-177 each bind S-adenosyl-L-methionine.

This sequence belongs to the methyltransferase superfamily. RsmJ family.

It localises to the cytoplasm. It carries out the reaction guanosine(1516) in 16S rRNA + S-adenosyl-L-methionine = N(2)-methylguanosine(1516) in 16S rRNA + S-adenosyl-L-homocysteine + H(+). Its function is as follows. Specifically methylates the guanosine in position 1516 of 16S rRNA. The polypeptide is Ribosomal RNA small subunit methyltransferase J (Haemophilus influenzae (strain ATCC 51907 / DSM 11121 / KW20 / Rd)).